A 238-amino-acid polypeptide reads, in one-letter code: tRNA (guanine-N(7)-)-methyltransferase (238 aa).

The S-adenosyl-L-methionine site is built by E68, E93, D120, and D143. D143 is a catalytic residue. Substrate contacts are provided by residues K147, D179, and 216 to 219 (TKFE).

The protein belongs to the class I-like SAM-binding methyltransferase superfamily. TrmB family.

The catalysed reaction is guanosine(46) in tRNA + S-adenosyl-L-methionine = N(7)-methylguanosine(46) in tRNA + S-adenosyl-L-homocysteine. The protein operates within tRNA modification; N(7)-methylguanine-tRNA biosynthesis. Functionally, catalyzes the formation of N(7)-methylguanine at position 46 (m7G46) in tRNA. In Shewanella baltica (strain OS223), this protein is tRNA (guanine-N(7)-)-methyltransferase.